The primary structure comprises 91 residues: DNA-directed RNA polymerase subunit omega (91 aa).

The protein belongs to the RNA polymerase subunit omega family. In terms of assembly, the RNAP catalytic core consists of 2 alpha, 1 beta, 1 beta' and 1 omega subunit. When a sigma factor is associated with the core the holoenzyme is formed, which can initiate transcription. The rRNA transcription and antitermination complex (rrnTAC) consists of RNAP, NusA, NusB, NusE (rpsJ), NusG, SubB, ribosomal protein S4, DNA and precursor rRNA; S4 is more flexible than other subunits.

It catalyses the reaction RNA(n) + a ribonucleoside 5'-triphosphate = RNA(n+1) + diphosphate. In terms of biological role, promotes RNA polymerase (RNAP) assembly. Latches the N- and C-terminal regions of the beta' subunit thereby facilitating its interaction with the beta and alpha subunits. Its function is as follows. Part of the processive rRNA transcription and antitermination complex (rrnTAC). The complex forms an RNA-chaperone ring around the RNA exit tunnel of RNAP. It supports rapid transcription and antitermination of rRNA operons, cotranscriptional rRNA folding, and annealing of distal rRNA regions to allow correct ribosome biogenesis. This chain is DNA-directed RNA polymerase subunit omega (rpoZ), found in Escherichia coli (strain K12).